Consider the following 127-residue polypeptide: Fluoride-specific ion channel FluC (127 aa).

The next 4 helical transmembrane spans lie at 7 to 27, 37 to 57, 70 to 90, and 102 to 122; these read LFLI…LTLL, FGTL…LAMF, FFVT…AEVI, and ITIT…GVFI. Residues Gly-77 and Thr-80 each coordinate Na(+).

This sequence belongs to the fluoride channel Fluc/FEX (TC 1.A.43) family.

Its subcellular location is the cell inner membrane. It catalyses the reaction fluoride(in) = fluoride(out). Na(+) is not transported, but it plays an essential structural role and its presence is essential for fluoride channel function. Fluoride-specific ion channel. Important for reducing fluoride concentration in the cell, thus reducing its toxicity. The protein is Fluoride-specific ion channel FluC of Histophilus somni (strain 129Pt) (Haemophilus somnus).